The primary structure comprises 160 residues: MSVTFPSSGCPSFFNIFYEEGIVMKLTIYYDGQFWVGVVEVVDNGKLRAFRHLFGKEPRDSEVLEFVHNQLLNMMAQAEQEGVRLQGRRQKKINPKRLQRQVSKELKNAGVTSKAQEAIKLELEARKQKKKQIMKEQREHVKEQRYMLKKQKAKKKHRGK.

Positions 69 to 145 (NQLLNMMAQA…EQREHVKEQR (77 aa)) form a coiled coil. Disordered stretches follow at residues 82–109 (GVRL…LKNA) and 129–160 (KKKQ…HRGK). Residues 86 to 99 (QGRRQKKINPKRLQ) show a composition bias toward basic residues. The segment covering 133 to 146 (IMKEQREHVKEQRY) has biased composition (basic and acidic residues). The segment covering 147–160 (MLKKQKAKKKHRGK) has biased composition (basic residues).

This is an uncharacterized protein from Bacillus subtilis (strain 168).